Reading from the N-terminus, the 680-residue chain is Harmonin-binding protein USHBP1 (680 aa).

Residues 1 to 15 (MSARATRPRSRRGRH) are compositionally biased toward basic residues. Disordered regions lie at residues 1-51 (MSAR…YLGP) and 134-161 (KSVE…PGQQ). Residues 179 to 218 (NREDELACTQASLQDAQAEKETLQRQVQELEDSLMQMEAS) are a coiled coil. 2 disordered regions span residues 220 to 247 (PTPI…VPQD) and 384 to 405 (TMEV…PTPE). Coiled-coil stretches lie at residues 363-386 (TKGD…ATME) and 467-506 (QIQQ…LRAQ). The interval 524–549 (FAGDGSSGGSSEDPSSEEEAGEDRQQ) is disordered. Residues 573–662 (QELSASLARA…QAEELAVLTA (90 aa)) are a coiled coil.

Belongs to the MCC family. As to quaternary structure, interacts via its C-terminus with the first PDZ domain of USH1C.

The polypeptide is Harmonin-binding protein USHBP1 (Mus musculus (Mouse)).